The following is a 583-amino-acid chain: Aspartate--tRNA ligase (583 aa).

Glu174 contacts L-aspartate. Residues 198 to 201 (QTFK) form an aspartate region. Arg220 contacts L-aspartate. Residues 220 to 222 (RDE) and Gln229 each bind ATP. Residue His445 participates in L-aspartate binding. Glu479 is an ATP binding site. Arg486 contributes to the L-aspartate binding site. An ATP-binding site is contributed by 531–534 (GLDR).

The protein belongs to the class-II aminoacyl-tRNA synthetase family. Type 1 subfamily. Homodimer.

It localises to the cytoplasm. The catalysed reaction is tRNA(Asp) + L-aspartate + ATP = L-aspartyl-tRNA(Asp) + AMP + diphosphate. Functionally, catalyzes the attachment of L-aspartate to tRNA(Asp) in a two-step reaction: L-aspartate is first activated by ATP to form Asp-AMP and then transferred to the acceptor end of tRNA(Asp). The polypeptide is Aspartate--tRNA ligase (Flavobacterium psychrophilum (strain ATCC 49511 / DSM 21280 / CIP 103535 / JIP02/86)).